The sequence spans 150 residues: MVTIVPYSHQYLKDICQLIQKDLSEPYSKYVYRYFVHQWPEFSFVALDNDRFIGAVICKQDVHRGTTLRGYIAMLAIVKEYRGQGIATKLTQASLDVMKNRGAQEIVLETEVDNEAAMSFYERLGFCRYKRLYRYYLNGTDAFRYILYPN.

One can recognise an N-acetyltransferase domain in the interval 2-150 (VTIVPYSHQY…DAFRYILYPN (149 aa)).

Belongs to the acetyltransferase family. MAK3 subfamily.

The protein resides in the cytoplasm. Its subcellular location is the nucleus. It catalyses the reaction N-terminal L-methionyl-L-leucyl-[protein] + acetyl-CoA = N-terminal N(alpha)-acetyl-L-methionyl-L-leucyl-[protein] + CoA + H(+). It carries out the reaction N-terminal L-methionyl-L-isoleucyl-[protein] + acetyl-CoA = N-terminal N(alpha)-acetyl-L-methionyl-L-isoleucyl-[protein] + CoA + H(+). The catalysed reaction is N-terminal L-methionyl-L-phenylalanyl-[protein] + acetyl-CoA = N-terminal N(alpha)-acetyl-L-methionyl-L-phenylalanyl-[protein] + CoA + H(+). The enzyme catalyses N-terminal L-methionyl-L-tryptophyl-[protein] + acetyl-CoA = N-terminal N(alpha)-acetyl-L-methionyl-L-tryptophyl-[protein] + CoA + H(+). It catalyses the reaction N-terminal L-methionyl-L-tyrosyl-[protein] + acetyl-CoA = N-terminal N(alpha)-acetyl-L-methionyl-L-tyrosyl-[protein] + CoA + H(+). In terms of biological role, catalytic component of the NatC N-terminal acetyltransferase. The sequence is that of N-alpha-acetyltransferase 30 (naa30) from Schizosaccharomyces pombe (strain 972 / ATCC 24843) (Fission yeast).